Consider the following 421-residue polypeptide: Enolase (421 aa).

Gln165 lines the (2R)-2-phosphoglycerate pocket. Residue Glu207 is the Proton donor of the active site. 3 residues coordinate Mg(2+): Asp244, Glu285, and Asp312. The (2R)-2-phosphoglycerate site is built by Lys337, Arg366, Ser367, and Lys388. Lys337 (proton acceptor) is an active-site residue.

Belongs to the enolase family. The cofactor is Mg(2+).

The protein resides in the cytoplasm. Its subcellular location is the secreted. The protein localises to the cell surface. The enzyme catalyses (2R)-2-phosphoglycerate = phosphoenolpyruvate + H2O. It functions in the pathway carbohydrate degradation; glycolysis; pyruvate from D-glyceraldehyde 3-phosphate: step 4/5. Functionally, catalyzes the reversible conversion of 2-phosphoglycerate (2-PG) into phosphoenolpyruvate (PEP). It is essential for the degradation of carbohydrates via glycolysis. This is Enolase from Ehrlichia canis (strain Jake).